Consider the following 255-residue polypeptide: tRNA (guanine-N(7)-)-methyltransferase (255 aa).

S-adenosyl-L-methionine is bound by residues glutamate 86, glutamate 111, aspartate 138, and aspartate 161. The active site involves aspartate 161. Residues lysine 165, aspartate 197, and 234–237 (TKFE) each bind substrate.

Belongs to the class I-like SAM-binding methyltransferase superfamily. TrmB family.

The enzyme catalyses guanosine(46) in tRNA + S-adenosyl-L-methionine = N(7)-methylguanosine(46) in tRNA + S-adenosyl-L-homocysteine. It participates in tRNA modification; N(7)-methylguanine-tRNA biosynthesis. Catalyzes the formation of N(7)-methylguanine at position 46 (m7G46) in tRNA. This chain is tRNA (guanine-N(7)-)-methyltransferase, found in Pasteurella multocida (strain Pm70).